The following is a 2748-amino-acid chain: Nuclear migration protein NUM1 (2748 aa).

Residues 1 to 10 show a composition bias toward basic residues; it reads MSHNNRHKKN. Disordered stretches follow at residues 1 to 36 and 290 to 312; these read MSHN…VSTN and YYQK…GTTS. Over residues 17–36 the composition is skewed to polar residues; sequence AGQYANSIDNSLSQESVSTN. Positions 293 to 304 are enriched in low complexity; that stretch reads KQHTSDTTVTSD. 12 repeat units span residues 593–656, 657–727, 728–798, 799–862, 863–926, 927–990, 991–1054, 1055–1118, 1119–1182, 1183–1246, 1247–1310, and 1311–1374. The interval 593–1384 is 13 X tandem repeats; sequence PSLEYLVEHA…PSLEYLVKHA (792 aa). Residues Ser611, Ser675, and Ser746 each carry the phosphoserine modification. Phosphoserine is present on residues Ser881, Ser945, and Ser1009. Residues Ser1201, Ser1265, and Ser1329 each carry the phosphoserine modification. A 13; truncated repeat occupies 1375-1384; the sequence is PSLEYLVKHA. Residues 2111-2133 are disordered; sequence ERAERIDEQSINTTSSNSTTTSS. The segment covering 2122–2133 has biased composition (low complexity); that stretch reads NTTSSNSTTTSS. Residues Ser2162, Ser2164, Ser2197, Ser2217, Ser2220, Ser2221, Ser2360, and Ser2424 each carry the phosphoserine modification. Residues 2444-2460 are compositionally biased toward basic and acidic residues; that stretch reads KEDKKGQATASKHEYVS. Positions 2444 to 2536 are disordered; the sequence is KEDKKGQATA…HSSRNTPASR (93 aa). Over residues 2465–2474 the composition is skewed to polar residues; it reads NKTSTVSTKS. Residues 2492–2503 show a composition bias toward basic and acidic residues; that stretch reads SESHPQIEEQSH. Position 2494 is a phosphoserine (Ser2494). The segment covering 2504–2514 has biased composition (basic residues); sequence RTNHHKHHKRQ. Residues 2516–2532 are compositionally biased toward low complexity; sequence SLNSNSTSKTTHSSRNT. Ser2545 is subject to Phosphoserine. The PH domain occupies 2573–2683; that stretch reads QTVIGEYLFK…WYNSLRYLLQ (111 aa). Positions 2707–2748 are disordered; it reads IFPLPGENTKSSSKRLSASRRSVSTRSLRHRVPQSRSFGNLR. Low complexity predominate over residues 2720–2730; sequence KRLSASRRSVS.

In terms of assembly, interacts with PAC11 when DYN1 is present, and TUB3.

It is found in the bud tip. Functionally, controls nuclear migration. NUM1 specifically controls the interaction of the bud neck cytoskeleton with the pre-divisional G2 nucleus. Functions in dynein-anchoring. During late anaphase forms dynein-interacting cortical microtubule capture sites at both cellular poles. This leads to dynein-dependent sliding of the microtubules in the bud. This Saccharomyces cerevisiae (strain ATCC 204508 / S288c) (Baker's yeast) protein is Nuclear migration protein NUM1 (NUM1).